The chain runs to 2549 residues: Serine/threonine-protein kinase mTOR (2549 aa).

Residue Met-1 is modified to N-acetylmethionine. Residues Met-1–Val-651 are interaction with NBN. HEAT repeat units follow at residues Ser-16–Arg-53, Met-55–Gly-99, Asn-100–Gly-137, Asp-138–Val-179, Pro-180–Thr-220, Gln-222–Ser-276, Met-277–Ile-313, Thr-314–Asp-364, Leu-365–Asp-409, Thr-410–Arg-445, Ser-446–Gly-494, Pro-495–Pro-529, Gln-530–His-563, Gln-564–Gly-596, His-597–Leu-636, Ile-637–Phe-683, His-686–Ala-724, Met-727–Arg-766, Arg-769–Leu-811, Arg-814–Tyr-853, Pro-857–Ala-893, Leu-894–Pro-942, Leu-943–Gln-988, Phe-989–Ile-1027, Pro-1029–Lys-1068, Leu-1069–Ala-1105, Asn-1106–Glu-1144, Ser-1145–Tyr-1188, Gln-1189–Glu-1225, Glu-1226–Arg-1273, Arg-1274–Asn-1311, and Pro-1312–Leu-1345. Ser-567 carries the phosphoserine modification. Thr-1162 bears the Phosphothreonine mark. Lys-1218 bears the N6-acetyllysine mark. Residue Ser-1261 is modified to Phosphoserine. 16 TPR repeats span residues Thr-1346–Leu-1382, Leu-1383–Pro-1408, Thr-1409–Glu-1442, Leu-1443–Asp-1473, Pro-1474–Glu-1507, Thr-1508–His-1541, Asp-1542–Glu-1574, Leu-1575–Ile-1614, Ile-1615–Asp-1649, Met-1650–His-1693, Pro-1694–Ala-1731, Ile-1732–Trp-1786, Tyr-1787–Gly-1846, Asn-1898–Ile-1930, Gln-1931–Gln-1970, and Ala-1971–Leu-2005. One can recognise an FAT domain in the interval Leu-1382 to Ser-1982. The 1D-myo-inositol hexakisphosphate site is built by Lys-1662, Lys-1702, and Arg-1749. Positions Ile-1825–Pro-1860 are enriched in low complexity. Residues Ile-1825–Lys-1867 form a disordered region. The sufficient for interaction with the FKBP1A/rapamycin complex stretch occupies residues Val-2012 to Tyr-2144. Lys-2066 participates in a covalent cross-link: Glycyl lysine isopeptide (Lys-Gly) (interchain with G-Cter in ubiquitin). The 314-residue stretch at Ile-2156 to Lys-2469 folds into the PI3K/PI4K catalytic domain. Ser-2159 is modified (phosphoserine; by TBK1). The tract at residues Val-2162–Arg-2168 is G-loop. Thr-2164 carries the post-translational modification Phosphothreonine. Ser-2165 and Gln-2167 together coordinate ATP. Thr-2173 is subject to Phosphothreonine; by PKB/AKT1. Leu-2185, Lys-2187, Glu-2190, Tyr-2225, Gly-2238, Trp-2239, Val-2240, and Thr-2245 together coordinate ATP. Positions Lys-2258–Gly-2296 are interaction with MLST8. The catalytic loop stretch occupies residues Gly-2335–Asn-2343. Mg(2+) is bound at residue Asn-2343. Met-2345 and Ile-2356 together coordinate ATP. The segment at His-2355–Thr-2380 is activation loop. Asp-2357 provides a ligand contact to Mg(2+). Thr-2446 carries the phosphothreonine; by RPS6KB1 modification. A Phosphoserine; by RPS6KB1 modification is found at Ser-2448. Ser-2478 and Ser-2481 each carry phosphoserine. Residues Asp-2517 to Trp-2549 enclose the FATC domain.

It belongs to the PI3/PI4-kinase family. Part of the mechanistic target of rapamycin complex 1 (mTORC1) which contains MTOR, MLST8 and RPTOR. The mTORC1 complex is a 1 Md obligate dimer of two stoichiometric heterotetramers with overall dimensions of 290 A x 210 A x 135 A. It has a rhomboid shape and a central cavity, the dimeric interfaces are formed by interlocking interactions between the two MTOR and the two RPTOR subunits. The MLST8 subunit forms distal foot-like protuberances, and contacts only one MTOR within the complex, while the small AKT1S1/PRAS40 localizes to the midsection of the central core, in close proximity to RPTOR. mTORC1 associates with AKT1S1/PRAS40, which inhibits its activity by blocking MTOR substrate-recruitment site. Component of the mechanistic target of rapamycin complex 2 (mTORC2), consisting in two heterotretramers composed of MTOR, MLST8, RICTOR and MAPKAP1/SIN1. Interacts with PLPP7 and PML. Interacts with PRR5 and RICTOR; the interaction is direct within the mTORC2 complex and interaction with RICTOR is enhanced by deubiquitination of RICTOR by USP9X. mTORC1 and mTORC2 associate with DEPTOR, which regulates their activity. Interacts with WAC; WAC positively regulates MTOR activity by promoting the assembly of the TTT complex composed of TELO2, TTI1 and TTI2 and the RUVBL complex composed of RUVBL1 and RUVBL2 into the TTT-RUVBL complex which leads to the dimerization of the mTORC1 complex and its subsequent activation. Interacts with UBQLN1. Interacts with TTI1 and TELO2. Interacts with CLIP1; phosphorylates and regulates CLIP1. Interacts with NBN. Interacts with HTR6. Interacts with BRAT1. Interacts with MEAK7 (via C-terminal domain); the interaction increases upon nutrient stimulation. Interacts with TM4SF5; the interaction is positively regulated by arginine and is negatively regulated by leucine. Interacts with GPR137B. Interacts with NCKAP1L. Interacts with TPCN1 and TPCN2; the interaction is required for TPCN1 and TPCN2 sensitivity to ATP. Interacts with ATP6V1A and with CRYAB, forming a ternary complex. Interacts with SLC38A7; this interaction mediates the recruitment of mTORC1 to the lysosome and its subsequent activation. Interacts with TSPAN8. Autophosphorylates when part of mTORC1 or mTORC2. Phosphorylation at Ser-1261, Ser-2159 and Thr-2164 promotes autophosphorylation. Phosphorylated at Ser-2448 by RPS6KB1. Phosphorylation in the kinase domain modulates the interactions of MTOR with RPTOR and AKT1S1/PRAS40 and leads to increased intrinsic mTORC1 kinase activity. Phosphorylation at Ser-2159 by TBK1 in response to growth factors and pathogen recognition receptors promotes mTORC1 activity. Phosphorylation at Ser-2159 by TBK1 in response to EGF growth factor promotes mTORC2 activity, leading to AKT1 phosphorylation and activation. Phosphorylation at Thr-2173 in the ATP-binding region by AKT1 strongly reduces kinase activity. Post-translationally, ubiquitinated at Lys-2066 by the SCF(FBXO22) complex via 'Lys-27'-linked ubiquitination prevents mTORC1 substrate recruitment.

Its subcellular location is the lysosome membrane. It is found in the endoplasmic reticulum membrane. The protein resides in the golgi apparatus membrane. The protein localises to the cell membrane. It localises to the mitochondrion outer membrane. Its subcellular location is the cytoplasm. It is found in the nucleus. The protein resides in the PML body. The protein localises to the microsome membrane. It localises to the cytoplasmic vesicle. Its subcellular location is the phagosome. The enzyme catalyses L-seryl-[protein] + ATP = O-phospho-L-seryl-[protein] + ADP + H(+). It carries out the reaction L-threonyl-[protein] + ATP = O-phospho-L-threonyl-[protein] + ADP + H(+). It catalyses the reaction L-tyrosyl-[protein] + ATP = O-phospho-L-tyrosyl-[protein] + ADP + H(+). Its activity is regulated as follows. The mTORC1 complex is activated in response to nutrients, growth factors or amino acids: activation requires relocalization of the mTORC1 complex to lysosomes that is mediated by the Ragulator complex, SLC38A9, and the Rag GTPases RagA/RRAGA, RagB/RRAGB, RagC/RRAGC and RagD/RRAGD. Activation of mTORC1 by growth factors such as insulin involves AKT1-mediated phosphorylation of TSC1-TSC2, which leads to the activation of the RHEB GTPase a potent activator of the protein kinase activity of mTORC1. Insulin-stimulated and amino acid-dependent phosphorylation at Ser-1261 promotes autophosphorylation and the activation of mTORC1. On the other hand, low cellular energy levels can inhibit mTORC1 through activation of PRKAA1 while hypoxia inhibits mTORC1 through a REDD1-dependent mechanism which may also require PRKAA1. The kinase activity of MTOR within the mTORC1 complex is positively regulated by MLST8. The kinase activity of MTOR is inhibited by DEPTOR and AKT1S1. The non-canonical mTORC1 complex is independent of the RHEB GTPase and specifically mediates phosphorylation of MiT/TFE factors TFEB and TFE3 but not other mTORC1 substrates: it is activated by FLCN, which activates Rag GTPases RagC/RRAGC and RagD/RRAGD. MTOR is the target of the immunosuppressive and anti-cancer drug rapamycin which acts in complex with FKBP1A/FKBP12, and specifically inhibits its kinase activity. mTORC2 is also activated by growth factors, but seems to be nutrient-insensitive. mTORC2 associates and is directly activated by ribosomes. mTORC2 may also be regulated by RHEB but in an indirect manner through the PI3K signaling pathway. Its function is as follows. Serine/threonine protein kinase which is a central regulator of cellular metabolism, growth and survival in response to hormones, growth factors, nutrients, energy and stress signals. MTOR directly or indirectly regulates the phosphorylation of at least 800 proteins. Functions as part of 2 structurally and functionally distinct signaling complexes mTORC1 and mTORC2 (mTOR complex 1 and 2). In response to nutrients, growth factors or amino acids, mTORC1 is recruited to the lysosome membrane and promotes protein, lipid and nucleotide synthesis by phosphorylating key regulators of mRNA translation and ribosome synthesis. This includes phosphorylation of EIF4EBP1 and release of its inhibition toward the elongation initiation factor 4E (eiF4E). Moreover, phosphorylates and activates RPS6KB1 and RPS6KB2 that promote protein synthesis by modulating the activity of their downstream targets including ribosomal protein S6, eukaryotic translation initiation factor EIF4B, and the inhibitor of translation initiation PDCD4. Stimulates the pyrimidine biosynthesis pathway, both by acute regulation through RPS6KB1-mediated phosphorylation of the biosynthetic enzyme CAD, and delayed regulation, through transcriptional enhancement of the pentose phosphate pathway which produces 5-phosphoribosyl-1-pyrophosphate (PRPP), an allosteric activator of CAD at a later step in synthesis, this function is dependent on the mTORC1 complex. Regulates ribosome synthesis by activating RNA polymerase III-dependent transcription through phosphorylation and inhibition of MAF1 an RNA polymerase III-repressor. Activates dormant ribosomes by mediating phosphorylation of SERBP1, leading to SERBP1 inactivation and reactivation of translation. In parallel to protein synthesis, also regulates lipid synthesis through SREBF1/SREBP1 and LPIN1. To maintain energy homeostasis mTORC1 may also regulate mitochondrial biogenesis through regulation of PPARGC1A. In the same time, mTORC1 inhibits catabolic pathways: negatively regulates autophagy through phosphorylation of ULK1. Under nutrient sufficiency, phosphorylates ULK1 at 'Ser-758', disrupting the interaction with AMPK and preventing activation of ULK1. Also prevents autophagy through phosphorylation of the autophagy inhibitor DAP. Also prevents autophagy by phosphorylating RUBCNL/Pacer under nutrient-rich conditions. Prevents autophagy by mediating phosphorylation of AMBRA1, thereby inhibiting AMBRA1 ability to mediate ubiquitination of ULK1 and interaction between AMBRA1 and PPP2CA. mTORC1 exerts a feedback control on upstream growth factor signaling that includes phosphorylation and activation of GRB10 a INSR-dependent signaling suppressor. Among other potential targets mTORC1 may phosphorylate CLIP1 and regulate microtubules. The mTORC1 complex is inhibited in response to starvation and amino acid depletion. The non-canonical mTORC1 complex, which acts independently of RHEB, specifically mediates phosphorylation of MiT/TFE factors TFEB and TFE3 in the presence of nutrients, promoting their cytosolic retention and inactivation. Upon starvation or lysosomal stress, inhibition of mTORC1 induces dephosphorylation and nuclear translocation of TFEB and TFE3, promoting their transcription factor activity. The mTORC1 complex regulates pyroptosis in macrophages by promoting GSDMD oligomerization. MTOR phosphorylates RPTOR which in turn inhibits mTORC1. As part of the mTORC2 complex, MTOR transduces signals from growth factors to pathways involved in proliferation, cytoskeletal organization, lipogenesis and anabolic output. In response to growth factors, mTORC2 phosphorylates and activates AGC protein kinase family members, including AKT (AKT1, AKT2 and AKT3), PKC (PRKCA, PRKCB and PRKCE) and SGK1. In contrast to mTORC1, mTORC2 is nutrient-insensitive. mTORC2 plays a critical role in AKT1 activation by mediating phosphorylation of different sites depending on the context, such as 'Thr-450', 'Ser-473', 'Ser-477' or 'Thr-479', facilitating the phosphorylation of the activation loop of AKT1 on 'Thr-308' by PDPK1/PDK1 which is a prerequisite for full activation. mTORC2 also regulates the phosphorylation of SGK1 at 'Ser-422'. mTORC2 may regulate the actin cytoskeleton, through phosphorylation of PRKCA, PXN and activation of the Rho-type guanine nucleotide exchange factors RHOA and RAC1A or RAC1B. The mTORC2 complex also phosphorylates various proteins involved in insulin signaling, such as FBXW8 and IGF2BP1. May also regulate insulin signaling by acting as a tyrosine protein kinase that catalyzes phosphorylation of IGF1R and INSR. Regulates osteoclastogenesis by adjusting the expression of CEBPB isoforms. Plays an important regulatory role in the circadian clock function; regulates period length and rhythm amplitude of the suprachiasmatic nucleus (SCN) and liver clocks. In Mus musculus (Mouse), this protein is Serine/threonine-protein kinase mTOR.